Here is a 444-residue protein sequence, read N- to C-terminus: UDP-N-acetylmuramate--L-alanine ligase (444 aa).

110–116 lines the ATP pocket; sequence GAHGKTS.

This sequence belongs to the MurCDEF family.

Its subcellular location is the cytoplasm. It catalyses the reaction UDP-N-acetyl-alpha-D-muramate + L-alanine + ATP = UDP-N-acetyl-alpha-D-muramoyl-L-alanine + ADP + phosphate + H(+). The protein operates within cell wall biogenesis; peptidoglycan biosynthesis. Functionally, cell wall formation. The polypeptide is UDP-N-acetylmuramate--L-alanine ligase (Streptococcus pneumoniae (strain ATCC 700669 / Spain 23F-1)).